A 239-amino-acid chain; its full sequence is Phosphoribosylaminoimidazole-succinocarboxamide synthase (239 aa).

Belongs to the SAICAR synthetase family.

The enzyme catalyses 5-amino-1-(5-phospho-D-ribosyl)imidazole-4-carboxylate + L-aspartate + ATP = (2S)-2-[5-amino-1-(5-phospho-beta-D-ribosyl)imidazole-4-carboxamido]succinate + ADP + phosphate + 2 H(+). The protein operates within purine metabolism; IMP biosynthesis via de novo pathway; 5-amino-1-(5-phospho-D-ribosyl)imidazole-4-carboxamide from 5-amino-1-(5-phospho-D-ribosyl)imidazole-4-carboxylate: step 1/2. The protein is Phosphoribosylaminoimidazole-succinocarboxamide synthase of Nitratiruptor sp. (strain SB155-2).